A 204-amino-acid chain; its full sequence is uncharacterized protein (204 aa).

Residues 118-169 (FPAASERPMPSRRLSKATQNVQTRPSERPAPCHRRPGPRGPGGRDPPEACHP) form a disordered region.

This is an uncharacterized protein from Encephalitozoon cuniculi (strain GB-M1) (Microsporidian parasite).